The sequence spans 269 residues: Homocitrate synthase subunit alpha (269 aa).

The region spanning 3–255 (INIVDTTLRD…IYTGDFEDII (253 aa)) is the Pyruvate carboxyltransferase domain.

Belongs to the alpha-IPM synthase/homocitrate synthase family. In terms of assembly, heterodimer of an alpha and an omega chain.

The enzyme catalyses acetyl-CoA + 2-oxoglutarate + H2O = (2R)-homocitrate + CoA + H(+). Functionally, this protein is a Fe-Mo-cofactor biosynthetic component. The chain is Homocitrate synthase subunit alpha (nifV-ALPHA) from Clostridium pasteurianum.